The sequence spans 157 residues: Protein Smg (157 aa).

The protein belongs to the Smg family.

The sequence is that of Protein Smg from Yersinia pseudotuberculosis serotype O:1b (strain IP 31758).